The chain runs to 595 residues: Aspartate--tRNA(Asp/Asn) ligase (595 aa).

Glu175 provides a ligand contact to L-aspartate. The segment at 199 to 202 (QQYK) is aspartate. L-aspartate contacts are provided by Arg221 and His454. ATP is bound at residue 221–223 (RDE). Glu488 lines the ATP pocket. Arg495 is an L-aspartate binding site. Residue 540–543 (GIDR) coordinates ATP.

The protein belongs to the class-II aminoacyl-tRNA synthetase family. Type 1 subfamily. Homodimer.

The protein localises to the cytoplasm. The catalysed reaction is tRNA(Asx) + L-aspartate + ATP = L-aspartyl-tRNA(Asx) + AMP + diphosphate. In terms of biological role, aspartyl-tRNA synthetase with relaxed tRNA specificity since it is able to aspartylate not only its cognate tRNA(Asp) but also tRNA(Asn). Reaction proceeds in two steps: L-aspartate is first activated by ATP to form Asp-AMP and then transferred to the acceptor end of tRNA(Asp/Asn). The sequence is that of Aspartate--tRNA(Asp/Asn) ligase from Rhizobium meliloti (strain 1021) (Ensifer meliloti).